We begin with the raw amino-acid sequence, 305 residues long: Translation initiation factor eIF2B subunit alpha (305 aa).

It belongs to the eIF-2B alpha/beta/delta subunits family. As to quaternary structure, component of the translation initiation factor 2B (eIF2B) complex which is a heterodecamer of two sets of five different subunits: alpha, beta, gamma, delta and epsilon. Subunits alpha, beta and delta comprise a regulatory subcomplex and subunits epsilon and gamma comprise a catalytic subcomplex. Within the complex, the hexameric regulatory complex resides at the center, with the two heterodimeric catalytic subcomplexes bound on opposite sides.

It is found in the cytoplasm. Its subcellular location is the cytosol. Functionally, acts as a component of the translation initiation factor 2B (eIF2B) complex, which catalyzes the exchange of GDP for GTP on eukaryotic initiation factor 2 (eIF2) gamma subunit. Its guanine nucleotide exchange factor activity is repressed when bound to eIF2 complex phosphorylated on the alpha subunit, thereby limiting the amount of methionyl-initiator methionine tRNA available to the ribosome and consequently global translation is repressed. In Caenorhabditis elegans, this protein is Translation initiation factor eIF2B subunit alpha.